Here is a 293-residue protein sequence, read N- to C-terminus: Ribosomal protein L11 methyltransferase (293 aa).

Threonine 145, glycine 166, aspartate 188, and asparagine 230 together coordinate S-adenosyl-L-methionine.

It belongs to the methyltransferase superfamily. PrmA family.

It localises to the cytoplasm. The enzyme catalyses L-lysyl-[protein] + 3 S-adenosyl-L-methionine = N(6),N(6),N(6)-trimethyl-L-lysyl-[protein] + 3 S-adenosyl-L-homocysteine + 3 H(+). Functionally, methylates ribosomal protein L11. This is Ribosomal protein L11 methyltransferase from Escherichia coli O7:K1 (strain IAI39 / ExPEC).